A 213-amino-acid polypeptide reads, in one-letter code: Protein arginine N-methyltransferase SFM1 (213 aa).

2 positions are modified to phosphoserine: serine 204 and serine 207.

This sequence belongs to the class IV-like SAM-binding methyltransferase superfamily. Protein arginine N-methyltransferase SFM1 family.

The protein localises to the cytoplasm. In terms of biological role, S-adenosyl-L-methionine-dependent protein-arginine N-methyltransferase that monomethylates ribosomal protein S3 (RPS3) at 'Arg-146'. This chain is Protein arginine N-methyltransferase SFM1, found in Saccharomyces cerevisiae (strain ATCC 204508 / S288c) (Baker's yeast).